A 371-amino-acid polypeptide reads, in one-letter code: Neuropeptide S receptor (371 aa).

At 1–52 (MPANLTEGSFHANQTVPMLDSSPVACTEIVTFTEALVAEEWGSFYSSFKTEQ) the chain is on the extracellular side. 2 N-linked (GlcNAc...) asparagine glycosylation sites follow: N4 and N13. A helical transmembrane segment spans residues 53 to 73 (LITLWVLFVVTIVGNSVVLFS). Residues 74–82 (TCRRKRKSR) lie on the Cytoplasmic side of the membrane. The helical transmembrane segment at 83-103 (MTFFVTQLAITDSFTGLINIL) threads the bilayer. The Extracellular portion of the chain corresponds to 104 to 123 (TDIIWRFTGDFMAPDLVCRV). Cysteines 121 and 197 form a disulfide. The chain crosses the membrane as a helical span at residues 124–144 (VRYLQVVLLYASTYVLVSLSI). Residues 145-164 (DRYHAIVYPMKFLQGEKQAK) are Cytoplasmic-facing. Residues 165 to 185 (VLIGIAWSLSFLFSIPTLIIF) form a helical membrane-spanning segment. At 186-212 (GKRTLSNGEVQCWALWPDDSYWTPYMT) the chain is on the extracellular side. A helical transmembrane segment spans residues 213-233 (IVAFLVYFIPLAIISVIYGLV). Topologically, residues 234-275 (IRTIWMKSKTHETVISNCSDGKLCCSYNRGLISKAKIKAIKY) are cytoplasmic. The chain crosses the membrane as a helical span at residues 276–296 (SIVIILAFICCWSPYFLFDIL). Residues 297 to 312 (DNFNVLPDTKERFYAS) are Extracellular-facing. The helical transmembrane segment at 313 to 333 (VIIQNLPALNSAINPLIYCIF) threads the bilayer. The Cytoplasmic segment spans residues 334-371 (SSSICSPCKMQRSQDSRMTYRERSERHEMQILSKPEFI).

This sequence belongs to the G-protein coupled receptor 1 family. Vasopressin/oxytocin receptor subfamily.

It is found in the cell membrane. Functionally, G-protein coupled receptor for neuropeptide S (NPS). Promotes mobilization of intracellular Ca(2+) stores. Inhibits cell growth in response to NPS binding. Involved in pathogenesis of asthma and other IgE-mediated diseases. The polypeptide is Neuropeptide S receptor (Npsr1) (Mus musculus (Mouse)).